A 440-amino-acid polypeptide reads, in one-letter code: UDP-N-acetylmuramoylalanine--D-glutamate ligase (440 aa).

Position 115–121 (115–121 (GSNGKST)) interacts with ATP.

This sequence belongs to the MurCDEF family.

The protein localises to the cytoplasm. It catalyses the reaction UDP-N-acetyl-alpha-D-muramoyl-L-alanine + D-glutamate + ATP = UDP-N-acetyl-alpha-D-muramoyl-L-alanyl-D-glutamate + ADP + phosphate + H(+). Its pathway is cell wall biogenesis; peptidoglycan biosynthesis. Functionally, cell wall formation. Catalyzes the addition of glutamate to the nucleotide precursor UDP-N-acetylmuramoyl-L-alanine (UMA). The protein is UDP-N-acetylmuramoylalanine--D-glutamate ligase of Vibrio cholerae serotype O1 (strain ATCC 39541 / Classical Ogawa 395 / O395).